Here is a 206-residue protein sequence, read N- to C-terminus: Guanylate kinase (206 aa).

Residues 6–184 (GNLFILSAPS…ALTDIETIVM (179 aa)) enclose the Guanylate kinase-like domain. 13 to 20 (APSGAGKS) serves as a coordination point for ATP.

Belongs to the guanylate kinase family.

The protein localises to the cytoplasm. The enzyme catalyses GMP + ATP = GDP + ADP. In terms of biological role, essential for recycling GMP and indirectly, cGMP. This Pseudoalteromonas translucida (strain TAC 125) protein is Guanylate kinase.